We begin with the raw amino-acid sequence, 480 residues long: Ribulose bisphosphate carboxylase large chain (480 aa).

A propeptide spanning residues 1–2 is cleaved from the precursor; that stretch reads MS. P3 carries the post-translational modification N-acetylproline. K14 is subject to N6,N6,N6-trimethyllysine. The substrate site is built by N123 and T173. K175 acts as the Proton acceptor in catalysis. K177 contacts substrate. 3 residues coordinate Mg(2+): K201, D203, and E204. K201 carries the post-translational modification N6-carboxylysine. H294 serves as the catalytic Proton acceptor. 3 residues coordinate substrate: R295, H327, and S379.

This sequence belongs to the RuBisCO large chain family. Type I subfamily. As to quaternary structure, heterohexadecamer of 8 large chains and 8 small chains; disulfide-linked. The disulfide link is formed within the large subunit homodimers. The cofactor is Mg(2+). The disulfide bond which can form in the large chain dimeric partners within the hexadecamer appears to be associated with oxidative stress and protein turnover.

Its subcellular location is the plastid. The protein resides in the chloroplast. The enzyme catalyses 2 (2R)-3-phosphoglycerate + 2 H(+) = D-ribulose 1,5-bisphosphate + CO2 + H2O. It carries out the reaction D-ribulose 1,5-bisphosphate + O2 = 2-phosphoglycolate + (2R)-3-phosphoglycerate + 2 H(+). Functionally, ruBisCO catalyzes two reactions: the carboxylation of D-ribulose 1,5-bisphosphate, the primary event in carbon dioxide fixation, as well as the oxidative fragmentation of the pentose substrate in the photorespiration process. Both reactions occur simultaneously and in competition at the same active site. The polypeptide is Ribulose bisphosphate carboxylase large chain (Rivina humilis (Rougeplant)).